We begin with the raw amino-acid sequence, 423 residues long: Glucose-1-phosphate adenylyltransferase (423 aa).

Alpha-D-glucose 1-phosphate contacts are provided by residues Tyr-100, Gly-165, 180-181, and Ser-191; that span reads EK.

It belongs to the bacterial/plant glucose-1-phosphate adenylyltransferase family. In terms of assembly, homotetramer.

The catalysed reaction is alpha-D-glucose 1-phosphate + ATP + H(+) = ADP-alpha-D-glucose + diphosphate. The protein operates within glycan biosynthesis; glycogen biosynthesis. Functionally, involved in the biosynthesis of ADP-glucose, a building block required for the elongation reactions to produce glycogen. Catalyzes the reaction between ATP and alpha-D-glucose 1-phosphate (G1P) to produce pyrophosphate and ADP-Glc. The chain is Glucose-1-phosphate adenylyltransferase from Lachnospira eligens (strain ATCC 27750 / DSM 3376 / VPI C15-48 / C15-B4) (Eubacterium eligens).